The sequence spans 92 residues: DNA/RNA-binding protein Alba (92 aa).

The residue at position 11 (Lys-11) is an N6-acetyllysine.

It belongs to the histone-like Alba family. Acetylated. Acetylation at Lys-11 decreases DNA-binding affinity.

Its subcellular location is the cytoplasm. The protein localises to the chromosome. Functionally, binds double-stranded DNA tightly but without sequence specificity. Involved in DNA compaction. This chain is DNA/RNA-binding protein Alba, found in Pyrobaculum aerophilum (strain ATCC 51768 / DSM 7523 / JCM 9630 / CIP 104966 / NBRC 100827 / IM2).